The following is a 109-amino-acid chain: Ribonuclease P protein component (109 aa).

The protein belongs to the RnpA family. As to quaternary structure, consists of a catalytic RNA component (M1 or rnpB) and a protein subunit.

It carries out the reaction Endonucleolytic cleavage of RNA, removing 5'-extranucleotides from tRNA precursor.. Functionally, RNaseP catalyzes the removal of the 5'-leader sequence from pre-tRNA to produce the mature 5'-terminus. It can also cleave other RNA substrates such as 4.5S RNA. The protein component plays an auxiliary but essential role in vivo by binding to the 5'-leader sequence and broadening the substrate specificity of the ribozyme. The chain is Ribonuclease P protein component from Streptococcus agalactiae serotype Ia (strain ATCC 27591 / A909 / CDC SS700).